Here is a 54-residue protein sequence, read N- to C-terminus: Defensin-like protein (54 aa).

Q1 is modified (pyrrolidone carboxylic acid). Disulfide bonds link C4/C52, C16/C37, C22/C47, and C26/C49.

It belongs to the DEFL family. As to quaternary structure, monomer.

Its subcellular location is the secreted. Its function is as follows. Taste-modifying protein; sweet-tasting. It is 2000 sweeter than sucrose on a molar basis. Functionally, has a pH-specific antimicrobial activity against bacteria (B.subtilis, E.coli and S.aureus) and the fungus C.albicans. The protein is Defensin-like protein of Pentadiplandra brazzeana.